The sequence spans 529 residues: Transcription activator of gluconeogenesis ERT1 (529 aa).

The segment at 1–31 is disordered; the sequence is MCTPDENDYKTSTDPDTSANTNHTLEKKKRK. Over residues 14–23 the composition is skewed to polar residues; the sequence is DPDTSANTNH. Residues 40–68 constitute a DNA-binding region (zn(2)-C6 fungal-type); the sequence is CVNCSRLHVSCEAKRPCLRCISKGLTATC. Residues 174–193 are compositionally biased toward low complexity; that stretch reads SNSTIGNSSNNSPTGTNTSP. Positions 174–198 are disordered; it reads SNSTIGNSSNNSPTGTNTSPEETEM. The PAS domain maps to 408–480; that stretch reads TLLEYVKFIA…KTLSKVAYRD (73 aa).

The protein belongs to the ERT1/acuK family.

It is found in the cytoplasm. The protein localises to the nucleus. Functionally, transcription factor which regulates nonfermentable carbon utilization. Activator of gluconeogenetic genes like PCK1. Involved in restriction of Ty1 transposition. The polypeptide is Transcription activator of gluconeogenesis ERT1 (ERT1) (Saccharomyces cerevisiae (strain ATCC 204508 / S288c) (Baker's yeast)).